The sequence spans 236 residues: GCN5-related N-acetyltransferase 8 (236 aa).

Residues 96-235 (ATITSSPSPD…DALEAFDQVN (140 aa)) enclose the N-acetyltransferase domain. Acetyl-CoA-binding positions include 161–163 (IFV), 169–174 (RKGFGS), 200–202 (NVN), and Tyr207. The active-site Proton donor is the Tyr207.

Belongs to the acetyltransferase family. GNAT subfamily. In terms of assembly, oligomer. In terms of tissue distribution, expressed throughout the plant.

It is found in the cytoplasm. Its subcellular location is the nucleus. It catalyses the reaction an N-terminal L-alpha-aminoacyl-[protein] + acetyl-CoA = N-terminal N(alpha)-acetyl-L-alpha-aminoacyl-[protein] + CoA + H(+). The enzyme catalyses L-lysyl-[protein] + acetyl-CoA = N(6)-acetyl-L-lysyl-[protein] + CoA + H(+). Its function is as follows. Probable protein acetyltransferase with dual specificity triggering both N-alpha-acetylation (NTA) and epsilon-lysine acetylation (KA). The chain is GCN5-related N-acetyltransferase 8 from Arabidopsis thaliana (Mouse-ear cress).